The primary structure comprises 179 residues: Bifunctional protein PyrR (179 aa).

The PRPP-binding motif lies at 100–112 (VILVDDVLFTGRT).

It belongs to the purine/pyrimidine phosphoribosyltransferase family. PyrR subfamily.

The catalysed reaction is UMP + diphosphate = 5-phospho-alpha-D-ribose 1-diphosphate + uracil. In terms of biological role, regulates the transcription of the pyrimidine nucleotide (pyr) operon in response to exogenous pyrimidines. Its function is as follows. Also displays a weak uracil phosphoribosyltransferase activity which is not physiologically significant. This chain is Bifunctional protein PyrR, found in Actinobacillus succinogenes (strain ATCC 55618 / DSM 22257 / CCUG 43843 / 130Z).